The primary structure comprises 98 residues: Large ribosomal subunit protein uL23 (98 aa).

It belongs to the universal ribosomal protein uL23 family. Part of the 50S ribosomal subunit. Contacts protein L29, and trigger factor when it is bound to the ribosome.

Functionally, one of the early assembly proteins it binds 23S rRNA. One of the proteins that surrounds the polypeptide exit tunnel on the outside of the ribosome. Forms the main docking site for trigger factor binding to the ribosome. This is Large ribosomal subunit protein uL23 from Maricaulis maris (strain MCS10) (Caulobacter maris).